Consider the following 846-residue polypeptide: Vinculin (846 aa).

Residues 1 to 257 (MPVKFHTKTL…VLQLTTTFEE (257 aa)) are interaction with TLN. A coiled-coil region spans residues 315–370 (RAKLLAAADELDQILKELEELQAKGLGDSRQARALAHAAAVKLQELEQEIRKALAE). Residues 617–646 (WVPPRPPLPELEEEEEPPELPPPPEDPASL) form a disordered region.

This sequence belongs to the vinculin/alpha-catenin family. Monomer. Interacts with TLN (talin); the interaction facilitates VIN1 binding to F-actin. As to expression, expressed in epithelial tissues, specifically the pinacoderm (outer epithelium) and choanoderm (feeding epithelium) (at protein level). Also detected in migratory cells of the mesohyl (at protein level).

The protein localises to the cytoplasm. Its subcellular location is the cell cortex. It localises to the cell projection. It is found in the filopodium. The protein resides in the cytoskeleton. Functionally, actin filament (F-actin)-binding protein which may play a role in cell-cell adhesion. The polypeptide is Vinculin (Oscarella pearsei (Sponge)).